An 862-amino-acid polypeptide reads, in one-letter code: Switch 2 (862 aa).

2 disordered regions span residues 13 to 43 (PCGS…SSLS) and 58 to 95 (KHES…DDER). Residues 16 to 27 (SFPSSSSLRVSS) are compositionally biased toward low complexity. Positions 58–84 (KHESKISKTQVEDFDHNEDDHKRNIKF) are enriched in basic and acidic residues. Positions 85-95 (DEEEVDEDDER) are enriched in acidic residues. The 173-residue stretch at 151 to 323 (YNLYKNNHGG…FNLFEWVAPG (173 aa)) folds into the Helicase ATP-binding domain. 164–171 (DDMGLGKT) contributes to the ATP binding site. Positions 274 to 277 (DEAH) match the DEAH box motif. A coiled-coil region spans residues 274 to 294 (DEAHRLKNEKSKLYEACLEIK). Residues 532–685 (ALEKLMASWI…VAGKMETRYF (154 aa)) form the Helicase C-terminal domain. Residues 782–793 (TTSTSQRLNGDG) are compositionally biased toward polar residues. The interval 782–821 (TTSTSQRLNGDGNSADRKKKKRKGCSEEEDMSSSNREQKR) is disordered.

It belongs to the SNF2/RAD54 helicase family.

May be involved in early DNA damage response. Probable chromatin remodeling factor. In Arabidopsis thaliana (Mouse-ear cress), this protein is Switch 2.